A 171-amino-acid chain; its full sequence is 3-hydroxydecanoyl-[acyl-carrier-protein] dehydratase (171 aa).

The active site involves His70.

Belongs to the thioester dehydratase family. FabA subfamily. Homodimer.

The protein resides in the cytoplasm. It catalyses the reaction a (3R)-hydroxyacyl-[ACP] = a (2E)-enoyl-[ACP] + H2O. The enzyme catalyses (3R)-hydroxydecanoyl-[ACP] = (2E)-decenoyl-[ACP] + H2O. The catalysed reaction is (2E)-decenoyl-[ACP] = (3Z)-decenoyl-[ACP]. Its pathway is lipid metabolism; fatty acid biosynthesis. Its function is as follows. Necessary for the introduction of cis unsaturation into fatty acids. Catalyzes the dehydration of (3R)-3-hydroxydecanoyl-ACP to E-(2)-decenoyl-ACP and then its isomerization to Z-(3)-decenoyl-ACP. Can catalyze the dehydratase reaction for beta-hydroxyacyl-ACPs with saturated chain lengths up to 16:0, being most active on intermediate chain length. This Azotobacter vinelandii (strain DJ / ATCC BAA-1303) protein is 3-hydroxydecanoyl-[acyl-carrier-protein] dehydratase.